We begin with the raw amino-acid sequence, 506 residues long: RNA-splicing ligase RtcB homolog (506 aa).

Aspartate 120, cysteine 123, histidine 228, histidine 260, and histidine 354 together coordinate Mn(2+). Position 227–231 (227–231 (NHYAE)) interacts with GMP. Residues 354–355 (HN), 403–406 (GGTM), serine 410, 429–432 (HGAG), and lysine 505 contribute to the GMP site. The GMP-histidine intermediate role is filled by histidine 429.

Belongs to the RtcB family. As to quaternary structure, catalytic component of the tRNA-splicing ligase complex. Mn(2+) is required as a cofactor.

It carries out the reaction a 3'-end 3'-phospho-ribonucleotide-RNA + a 5'-end dephospho-ribonucleoside-RNA + GTP = a ribonucleotidyl-ribonucleotide-RNA + GMP + diphosphate. The catalysed reaction is a 3'-end 2',3'-cyclophospho-ribonucleotide-RNA + a 5'-end dephospho-ribonucleoside-RNA + GTP + H2O = a ribonucleotidyl-ribonucleotide-RNA + GMP + diphosphate + H(+). Catalytic subunit of the tRNA-splicing ligase complex that acts by directly joining spliced tRNA halves to mature-sized tRNAs by incorporating the precursor-derived splice junction phosphate into the mature tRNA as a canonical 3',5'-phosphodiester. May act as an RNA ligase with broad substrate specificity, and may function toward other RNAs. The polypeptide is RNA-splicing ligase RtcB homolog (Drosophila melanogaster (Fruit fly)).